Reading from the N-terminus, the 251-residue chain is Aspartate/glutamate leucyltransferase (251 aa).

Belongs to the R-transferase family. Bpt subfamily.

The protein localises to the cytoplasm. It carries out the reaction N-terminal L-glutamyl-[protein] + L-leucyl-tRNA(Leu) = N-terminal L-leucyl-L-glutamyl-[protein] + tRNA(Leu) + H(+). The enzyme catalyses N-terminal L-aspartyl-[protein] + L-leucyl-tRNA(Leu) = N-terminal L-leucyl-L-aspartyl-[protein] + tRNA(Leu) + H(+). Its function is as follows. Functions in the N-end rule pathway of protein degradation where it conjugates Leu from its aminoacyl-tRNA to the N-termini of proteins containing an N-terminal aspartate or glutamate. This is Aspartate/glutamate leucyltransferase from Xanthomonas axonopodis pv. citri (strain 306).